The primary structure comprises 91 residues: MKPMYRSRSWRRKYVRTPGGRVVVHFERKKPKIAHCAICGRPLNGIPRGRPVEMRKLPKTKKRPERPMPYLCPRCMRRVMKEQIRSQIMKG.

A disordered region spans residues 48 to 69; that stretch reads RGRPVEMRKLPKTKKRPERPMP.

This sequence belongs to the eukaryotic ribosomal protein eL34 family.

The protein is Large ribosomal subunit protein eL34 (rpl34e) of Pyrococcus horikoshii (strain ATCC 700860 / DSM 12428 / JCM 9974 / NBRC 100139 / OT-3).